Consider the following 161-residue polypeptide: Nucleotide-binding protein Shew185_3601 (161 aa).

Belongs to the YajQ family.

Nucleotide-binding protein. The chain is Nucleotide-binding protein Shew185_3601 from Shewanella baltica (strain OS185).